The primary structure comprises 97 residues: Acylphosphatase (97 aa).

The Acylphosphatase-like domain occupies Arg7–Arg97. Active-site residues include Arg22 and Asn40.

It belongs to the acylphosphatase family.

The catalysed reaction is an acyl phosphate + H2O = a carboxylate + phosphate + H(+). This is Acylphosphatase (acyP) from Mycobacterium avium (strain 104).